A 355-amino-acid polypeptide reads, in one-letter code: Glycerol-1-phosphate dehydrogenase [NAD(P)+] (355 aa).

NAD(+) contacts are provided by residues 101–105 (GKSID) and 123–126 (TAAS). Residue Asp128 participates in substrate binding. Residue Ser132 coordinates NAD(+). Asp175 contacts substrate. Zn(2+)-binding residues include Asp175 and His255. His259 is a binding site for substrate. His271 is a Zn(2+) binding site.

This sequence belongs to the glycerol-1-phosphate dehydrogenase family. Homodimer. The cofactor is Zn(2+).

The protein localises to the cytoplasm. It carries out the reaction sn-glycerol 1-phosphate + NAD(+) = dihydroxyacetone phosphate + NADH + H(+). The enzyme catalyses sn-glycerol 1-phosphate + NADP(+) = dihydroxyacetone phosphate + NADPH + H(+). It functions in the pathway membrane lipid metabolism; glycerophospholipid metabolism. Functionally, catalyzes the NAD(P)H-dependent reduction of dihydroxyacetonephosphate (DHAP or glycerone phosphate) to glycerol 1-phosphate (G1P). The G1P thus generated is used as the glycerophosphate backbone of phospholipids in the cellular membranes of Archaea. This chain is Glycerol-1-phosphate dehydrogenase [NAD(P)+], found in Staphylothermus marinus (strain ATCC 43588 / DSM 3639 / JCM 9404 / F1).